Consider the following 324-residue polypeptide: Glutathione synthetase (324 aa).

An ATP-grasp domain is found at 124-309; the sequence is KLAIAQFREF…VAGMFIDALE (186 aa). Residue 150–206 coordinates ATP; that stretch reads HAEQGDVIFKPLDGMGGAGIFRVGADGMNLGSVIETLTHNGTRTVMAQQYIPAIRDG. Mg(2+) is bound by residues glutamate 280 and asparagine 282.

The protein belongs to the prokaryotic GSH synthase family. Mg(2+) serves as cofactor. Requires Mn(2+) as cofactor.

It carries out the reaction gamma-L-glutamyl-L-cysteine + glycine + ATP = glutathione + ADP + phosphate + H(+). The protein operates within sulfur metabolism; glutathione biosynthesis; glutathione from L-cysteine and L-glutamate: step 2/2. This chain is Glutathione synthetase, found in Ralstonia nicotianae (strain ATCC BAA-1114 / GMI1000) (Ralstonia solanacearum).